Reading from the N-terminus, the 260-residue chain is Indole-3-glycerol phosphate synthase (260 aa).

The protein belongs to the TrpC family.

The enzyme catalyses 1-(2-carboxyphenylamino)-1-deoxy-D-ribulose 5-phosphate + H(+) = (1S,2R)-1-C-(indol-3-yl)glycerol 3-phosphate + CO2 + H2O. The protein operates within amino-acid biosynthesis; L-tryptophan biosynthesis; L-tryptophan from chorismate: step 4/5. The protein is Indole-3-glycerol phosphate synthase of Neisseria gonorrhoeae (strain NCCP11945).